Here is a 259-residue protein sequence, read N- to C-terminus: NAD kinase (259 aa).

Asp-49 (proton acceptor) is an active-site residue. Residues 49-50 (DG), Arg-54, 118-119 (NE), Asp-148, Ala-156, 159-164 (TAYNYS), and Ala-183 each bind NAD(+).

The protein belongs to the NAD kinase family. Requires a divalent metal cation as cofactor.

The protein resides in the cytoplasm. It catalyses the reaction NAD(+) + ATP = ADP + NADP(+) + H(+). Its function is as follows. Involved in the regulation of the intracellular balance of NAD and NADP, and is a key enzyme in the biosynthesis of NADP. Catalyzes specifically the phosphorylation on 2'-hydroxyl of the adenosine moiety of NAD to yield NADP. This is NAD kinase from Xylella fastidiosa (strain Temecula1 / ATCC 700964).